The sequence spans 305 residues: UDP-3-O-acyl-N-acetylglucosamine deacetylase (305 aa).

The Zn(2+) site is built by H78, H235, and D239. H262 acts as the Proton donor in catalysis.

The protein belongs to the LpxC family. Zn(2+) serves as cofactor.

The catalysed reaction is a UDP-3-O-[(3R)-3-hydroxyacyl]-N-acetyl-alpha-D-glucosamine + H2O = a UDP-3-O-[(3R)-3-hydroxyacyl]-alpha-D-glucosamine + acetate. The protein operates within glycolipid biosynthesis; lipid IV(A) biosynthesis; lipid IV(A) from (3R)-3-hydroxytetradecanoyl-[acyl-carrier-protein] and UDP-N-acetyl-alpha-D-glucosamine: step 2/6. Its function is as follows. Catalyzes the hydrolysis of UDP-3-O-myristoyl-N-acetylglucosamine to form UDP-3-O-myristoylglucosamine and acetate, the committed step in lipid A biosynthesis. The sequence is that of UDP-3-O-acyl-N-acetylglucosamine deacetylase from Geobacter sp. (strain M21).